Here is a 373-residue protein sequence, read N- to C-terminus: DNA primase small subunit PriS (373 aa).

Residues Asp-95, Asp-97, and Asp-281 contribute to the active site.

The protein belongs to the eukaryotic-type primase small subunit family. Heterodimer of a small subunit (PriS) and a large subunit (PriL). Mg(2+) serves as cofactor. The cofactor is Mn(2+).

In terms of biological role, catalytic subunit of DNA primase, an RNA polymerase that catalyzes the synthesis of short RNA molecules used as primers for DNA polymerase during DNA replication. The small subunit contains the primase catalytic core and has DNA synthesis activity on its own. Binding to the large subunit stabilizes and modulates the activity, increasing the rate of DNA synthesis while decreasing the length of the DNA fragments, and conferring RNA synthesis capability. The DNA polymerase activity may enable DNA primase to also catalyze primer extension after primer synthesis. May also play a role in DNA repair. The protein is DNA primase small subunit PriS of Nitrosopumilus maritimus (strain SCM1).